The sequence spans 892 residues: MAVARSLRSGDSRPRTGSEIRTAFLTFFAERAHQVIPSASLVPEDPTVLLTIAGMLPFKPVFMGQAERPAPRATSSQKCIRTNDIENVGRTARHHTFFEMLGNFSFGDYFKQQAIEWAWELTTEVFGLDPKNLVVSVFREDDEAETIWRDVVGVNPKRIMRMDEADNFWASGPTGPCGPCSEIYYDFKPDLGNDDIDLEDDGRFVEFYNLVFMQYNRDGEGNLTPLANRNIDTGMGLERMAQILQGVPNNYETDIIYPLIETAAGLAGLDYQKLDEKGKTSFKVIGDHCRAITHLICDGVTASNLGRGYIMRRLLRRVVRHGRLVGIEKPFLQAMGEAAIALMVEAYPQLEERRKLILAELNREEARFLETLERGEKVLADVLVANPQMISGGQAFELYDTYGFPLELTQEIAEEHGLTVDLQGFEQAMDQQRQRAKAAAVSIDLTLQGAIEQMAAELEATRFQGYEVLEQPCCVLALVVNGESAERASAGDSVQIVLDTTPFYGESGGQVGDHGVLSGEGSGGNGVIVTVDDVSRHRNVFVHFGRIERGTLALGDLVNAQVDRACRRRAQANHTATHLLQAALKQVVDSGIGQAGSLVDFDRLRFDFHCARAVTAKELEQIEALINGWIMESHDLIVEEMSIQEAKAAGAVAMFGEKYADVVRVVDVPGVSMELCGGTHVANTAEIGLFKIVAESSVAAGIRRIEAVAGPAVLAYLNERDEVVKKLLERLKVQPSEIVERVTSLQEELKSSQKALTAARAELAVAKSAALATQAVAVGEYQLLVARLDGVEGAGLQNAAQGLLDQLGDGAAVVLGGLPDPSDEGKVILVAAFGKQLIAQGQQAGKFIGSIAKRCGGGGGGRPNLAQAGGRDGAALDGALEAAKVDLQQALG.

Positions 574, 578, 676, and 680 each coordinate Zn(2+).

The protein belongs to the class-II aminoacyl-tRNA synthetase family. The cofactor is Zn(2+).

The protein localises to the cytoplasm. It catalyses the reaction tRNA(Ala) + L-alanine + ATP = L-alanyl-tRNA(Ala) + AMP + diphosphate. Catalyzes the attachment of alanine to tRNA(Ala) in a two-step reaction: alanine is first activated by ATP to form Ala-AMP and then transferred to the acceptor end of tRNA(Ala). Also edits incorrectly charged Ser-tRNA(Ala) and Gly-tRNA(Ala) via its editing domain. The protein is Alanine--tRNA ligase of Prochlorococcus marinus (strain MIT 9313).